The following is a 421-amino-acid chain: 3-isopropylmalate dehydratase large subunit (421 aa).

Residues cysteine 302, cysteine 362, and cysteine 365 each coordinate [4Fe-4S] cluster.

It belongs to the aconitase/IPM isomerase family. LeuC type 2 subfamily. In terms of assembly, heterodimer of LeuC and LeuD. Requires [4Fe-4S] cluster as cofactor.

It carries out the reaction (2R,3S)-3-isopropylmalate = (2S)-2-isopropylmalate. It functions in the pathway amino-acid biosynthesis; L-leucine biosynthesis; L-leucine from 3-methyl-2-oxobutanoate: step 2/4. Functionally, catalyzes the isomerization between 2-isopropylmalate and 3-isopropylmalate, via the formation of 2-isopropylmaleate. In Nitratiruptor sp. (strain SB155-2), this protein is 3-isopropylmalate dehydratase large subunit.